The sequence spans 1049 residues: Protein phosphatase Slingshot homolog 1 (1049 aa).

Polar residues predominate over residues 1-12 (MALVTLQRSPTP). The segment at 1-28 (MALVTLQRSPTPSAASSSASNSELEAGS) is disordered. N-acetylalanine is present on alanine 2. Residues 13-25 (SAASSSASNSELE) are compositionally biased toward low complexity. 2 positions are modified to phosphoserine: serine 37 and serine 57. Residues 249-304 (ERTERLIKAKLRSIMMSQDLENVTSKEIRNELEKQMNCNLKELKEFIDNEMLLILG) form the DEK-C domain. The Tyrosine-protein phosphatase domain occupies 308 to 449 (KPSLIFDHLY…LSEYEGILDA (142 aa)). Cysteine 393 acts as the Phosphocysteine intermediate in catalysis. The disordered stretch occupies residues 456-499 (KLWRQQTDSSLQQPVDDPAGPGDFLPETPDGTPESQLPFLDDAA). Positions 458 to 468 (WRQQTDSSLQQ) are enriched in polar residues. Phosphoserine is present on serine 515. Disordered stretches follow at residues 544–603 (AAPP…RWGQ), 693–787 (HLAS…KPAK), 825–899 (HTKE…KSPP), and 923–955 (PTSS…KQRT). The segment covering 564-573 (CEKDVKKKLE) has biased composition (basic and acidic residues). A Phosphoserine modification is found at serine 576. Positions 731–742 (GAALEPPASLLE) are enriched in low complexity. A compositionally biased stretch (basic and acidic residues) spans 772 to 787 (VIKEESSPKKDMKPAK). Position 897 is a phosphoserine (serine 897). The interaction with YWHAG stretch occupies residues 897–1049 (SPPPFFYRLD…LKSPSWMSKS (153 aa)). The span at 925–943 (SSSMSSNLTRSSSSDSIHS) shows a compositional bias: low complexity. Phosphoserine is present on serine 978. The tract at residues 989–1049 (TEDLSSEADP…LKSPSWMSKS (61 aa)) is disordered. Polar residues predominate over residues 1001 to 1013 (VADSQDTTLSESS).

The protein belongs to the protein-tyrosine phosphatase family. Interacts with actin and this stimulates phosphatase activity. Also interacts with LIMK1 and with the 14-3-3 proteins YWHAB, YWHAG, YWHAQ, and YWHAZ. Interaction with 14-3-3 proteins inhibits phosphatase activity and also blocks recruitment to lamellipodia and stimulation by actin. Post-translationally, phosphorylated. Inhibitory phosphorylation by PAK4 promotes binding to YWHAZ. Phosphorylation at Ser-978 is decreased by stimuli which promote actin reorganization and lamellipodia formation. Can be dephosphorylated and activated by PPP3CA/calcineurin A. Phosphorylation decreases immediately prior to telophase.

The protein resides in the cytoplasm. The protein localises to the cytoskeleton. Its subcellular location is the cell projection. It is found in the lamellipodium. It localises to the cleavage furrow. The protein resides in the midbody. It catalyses the reaction O-phospho-L-tyrosyl-[protein] + H2O = L-tyrosyl-[protein] + phosphate. It carries out the reaction O-phospho-L-seryl-[protein] + H2O = L-seryl-[protein] + phosphate. The catalysed reaction is O-phospho-L-threonyl-[protein] + H2O = L-threonyl-[protein] + phosphate. Protein phosphatase which regulates actin filament dynamics. Dephosphorylates and activates the actin binding/depolymerizing factor cofilin, which subsequently binds to actin filaments and stimulates their disassembly. Inhibitory phosphorylation of cofilin is mediated by LIMK1, which may also be dephosphorylated and inactivated by this protein. The polypeptide is Protein phosphatase Slingshot homolog 1 (Homo sapiens (Human)).